We begin with the raw amino-acid sequence, 115 residues long: NADH-ubiquinone oxidoreductase chain 3 (115 aa).

Transmembrane regions (helical) follow at residues 4–24 (LLAMLINITLSLLLISIAFWL), 55–75 (FFLVAITFLLFDLEIALLLPI), and 87–107 (MMLTAFILVTILALGLAYEWI).

It belongs to the complex I subunit 3 family. As to quaternary structure, core subunit of respiratory chain NADH dehydrogenase (Complex I) which is composed of 45 different subunits. Interacts with TMEM186. Interacts with TMEM242.

The protein resides in the mitochondrion inner membrane. It catalyses the reaction a ubiquinone + NADH + 5 H(+)(in) = a ubiquinol + NAD(+) + 4 H(+)(out). In terms of biological role, core subunit of the mitochondrial membrane respiratory chain NADH dehydrogenase (Complex I) which catalyzes electron transfer from NADH through the respiratory chain, using ubiquinone as an electron acceptor. Essential for the catalytic activity of complex I. The chain is NADH-ubiquinone oxidoreductase chain 3 from Neotoma floridana (Eastern woodrat).